Consider the following 367-residue polypeptide: RNA-binding protein 48 (367 aa).

The RRM domain occupies 46-124; the sequence is QYLLIQGVPA…GLLHVCYAPE (79 aa). Disordered regions lie at residues 217–243, 280–302, and 343–367; these read PVDR…HNDS, QLQE…QTNP, and SVPK…RRRI. The segment covering 347-357 has biased composition (basic and acidic residues); sequence PPEDKPEDVHT.

It belongs to the RBM48 family. Component of the minor spliceosome. Within this complex, interacts with ARMC7 and PRPF8/PRP8.

As a component of the minor spliceosome, involved in the splicing of U12-type introns in pre-mRNAs. The sequence is that of RNA-binding protein 48 (RBM48) from Homo sapiens (Human).